Reading from the N-terminus, the 475-residue chain is Fez family zinc finger protein 1 (475 aa).

The short motif at 28–43 (PLAFSIERIMARTPEP) is the Engrailed homology 1 repressor element. 6 C2H2-type zinc fingers span residues 260–282 (FTCE…MPVH), 288–310 (FVCK…KIIH), 316–338 (HKCN…TRIH), 344–366 (FVCE…KLTH), 372–394 (FKCN…MHTH), and 400–423 (FTCP…RKLH). The segment at 425 to 475 (SSLGLTRTPTGEPSSDPPPQLQQPPPAPLPPLQPTLPPPGPLPSGLHQGHQ) is disordered. Residues 427-437 (LGLTRTPTGEP) are compositionally biased toward polar residues. Positions 439–466 (SDPPPQLQQPPPAPLPPLQPTLPPPGPL) are enriched in pro residues.

The protein belongs to the krueppel C2H2-type zinc-finger protein family.

The protein localises to the nucleus. In terms of biological role, transcription repressor. Involved in the axonal projection and proper termination of olfactory sensory neurons (OSN). Plays a role in rostro-caudal patterning of the diencephalon and in prethalamic formation. Expression is required in OSN to cell-autonomously regulate OSN axon projections. Regulates non-cell-autonomously the layer formation of the olfactory bulb development and the interneurons. May be required for correct rostral migration of the interneuron progenitors. This chain is Fez family zinc finger protein 1 (Fezf1), found in Mus musculus (Mouse).